We begin with the raw amino-acid sequence, 357 residues long: GPI mannosyltransferase 2 (357 aa).

8 helical membrane passes run 6–26 (TLIV…LVVP), 86–106 (AIAY…ALML), 128–148 (ILSP…FALL), 167–187 (VLGA…PFLF), 201–221 (GVSV…TQYL), 257–277 (YWTA…YLMY), 286–306 (LVPF…MWHV), and 334–354 (YVVR…GAYL).

The protein belongs to the PIGV family.

Its subcellular location is the endoplasmic reticulum membrane. Its pathway is glycolipid biosynthesis; glycosylphosphatidylinositol-anchor biosynthesis. Functionally, mannosyltransferase involved in glycosylphosphatidylinositol-anchor biosynthesis. Transfers the second mannose to the glycosylphosphatidylinositol during GPI precursor assembly. This is GPI mannosyltransferase 2 (GPI18) from Yarrowia lipolytica (strain CLIB 122 / E 150) (Yeast).